A 274-amino-acid polypeptide reads, in one-letter code: NADPH-dependent 7-cyano-7-deazaguanine reductase (274 aa).

Substrate is bound at residue 80–82; it reads VES. Residue 82–83 coordinates NADPH; that stretch reads SK. The active-site Thioimide intermediate is the C181. Residue D188 is the Proton donor of the active site. Substrate is bound at residue 220–221; that stretch reads HE. Residue 249-250 coordinates NADPH; that stretch reads RG.

The protein belongs to the GTP cyclohydrolase I family. QueF type 2 subfamily. In terms of assembly, homodimer.

Its subcellular location is the cytoplasm. It carries out the reaction 7-aminomethyl-7-carbaguanine + 2 NADP(+) = 7-cyano-7-deazaguanine + 2 NADPH + 3 H(+). It participates in tRNA modification; tRNA-queuosine biosynthesis. Catalyzes the NADPH-dependent reduction of 7-cyano-7-deazaguanine (preQ0) to 7-aminomethyl-7-deazaguanine (preQ1). This Paraburkholderia phytofirmans (strain DSM 17436 / LMG 22146 / PsJN) (Burkholderia phytofirmans) protein is NADPH-dependent 7-cyano-7-deazaguanine reductase.